A 300-amino-acid polypeptide reads, in one-letter code: Energy-coupling factor transporter ATP-binding protein EcfA2 (300 aa).

The region spanning 3 to 258 (IKAKNIVKIY…NKFLIENKML (256 aa)) is the ABC transporter domain. Residue 40-47 (GQTGSGKT) participates in ATP binding.

The protein belongs to the ABC transporter superfamily. Energy-coupling factor EcfA family. Forms a stable energy-coupling factor (ECF) transporter complex composed of 2 membrane-embedded substrate-binding proteins (S component), 2 ATP-binding proteins (A component) and 2 transmembrane proteins (T component).

Its subcellular location is the cell membrane. ATP-binding (A) component of a common energy-coupling factor (ECF) ABC-transporter complex. Unlike classic ABC transporters this ECF transporter provides the energy necessary to transport a number of different substrates. In Mesomycoplasma hyopneumoniae (strain 232) (Mycoplasma hyopneumoniae), this protein is Energy-coupling factor transporter ATP-binding protein EcfA2.